The following is a 103-amino-acid chain: Large ribosomal subunit protein bL21 (103 aa).

The protein belongs to the bacterial ribosomal protein bL21 family. As to quaternary structure, part of the 50S ribosomal subunit. Contacts protein L20.

Its function is as follows. This protein binds to 23S rRNA in the presence of protein L20. The protein is Large ribosomal subunit protein bL21 of Rhodococcus jostii (strain RHA1).